Here is a 214-residue protein sequence, read N- to C-terminus: Orotate phosphoribosyltransferase (214 aa).

5-phospho-alpha-D-ribose 1-diphosphate is bound at residue K26. Residue 34-35 (FF) coordinates orotate. Residues 72-73 (YK), R99, K100, K103, H105, and 124-132 (DDVITAGTA) each bind 5-phospho-alpha-D-ribose 1-diphosphate. Orotate is bound by residues T128 and R156.

Belongs to the purine/pyrimidine phosphoribosyltransferase family. PyrE subfamily. As to quaternary structure, homodimer. Mg(2+) serves as cofactor.

It carries out the reaction orotidine 5'-phosphate + diphosphate = orotate + 5-phospho-alpha-D-ribose 1-diphosphate. The protein operates within pyrimidine metabolism; UMP biosynthesis via de novo pathway; UMP from orotate: step 1/2. Functionally, catalyzes the transfer of a ribosyl phosphate group from 5-phosphoribose 1-diphosphate to orotate, leading to the formation of orotidine monophosphate (OMP). This is Orotate phosphoribosyltransferase from Pasteurella multocida (strain Pm70).